Reading from the N-terminus, the 459-residue chain is Bifunctional protein GlmU (459 aa).

Positions 1–230 (MSNRFAVILA…FDETLGVNDR (230 aa)) are pyrophosphorylase. UDP-N-acetyl-alpha-D-glucosamine contacts are provided by residues 9–12 (LAAG), Lys-23, Gln-73, and 78–79 (GT). Mg(2+) is bound at residue Asp-103. Residues Gly-140, Glu-155, Asn-170, and Asn-228 each coordinate UDP-N-acetyl-alpha-D-glucosamine. A Mg(2+)-binding site is contributed by Asn-228. Residues 231–251 (VALSQAEIIMKNRINRKNMVN) are linker. The interval 252-459 (GVTIIDPSNT…VDQLLNKKKS (208 aa)) is N-acetyltransferase. UDP-N-acetyl-alpha-D-glucosamine-binding residues include Arg-333 and Lys-351. His-363 acts as the Proton acceptor in catalysis. UDP-N-acetyl-alpha-D-glucosamine is bound by residues Tyr-366 and Asn-377. Residues 386–387 (NY), Ala-423, and Arg-440 contribute to the acetyl-CoA site.

It in the N-terminal section; belongs to the N-acetylglucosamine-1-phosphate uridyltransferase family. This sequence in the C-terminal section; belongs to the transferase hexapeptide repeat family. Homotrimer. Mg(2+) serves as cofactor.

Its subcellular location is the cytoplasm. It carries out the reaction alpha-D-glucosamine 1-phosphate + acetyl-CoA = N-acetyl-alpha-D-glucosamine 1-phosphate + CoA + H(+). The catalysed reaction is N-acetyl-alpha-D-glucosamine 1-phosphate + UTP + H(+) = UDP-N-acetyl-alpha-D-glucosamine + diphosphate. It participates in nucleotide-sugar biosynthesis; UDP-N-acetyl-alpha-D-glucosamine biosynthesis; N-acetyl-alpha-D-glucosamine 1-phosphate from alpha-D-glucosamine 6-phosphate (route II): step 2/2. The protein operates within nucleotide-sugar biosynthesis; UDP-N-acetyl-alpha-D-glucosamine biosynthesis; UDP-N-acetyl-alpha-D-glucosamine from N-acetyl-alpha-D-glucosamine 1-phosphate: step 1/1. It functions in the pathway bacterial outer membrane biogenesis; LPS lipid A biosynthesis. In terms of biological role, catalyzes the last two sequential reactions in the de novo biosynthetic pathway for UDP-N-acetylglucosamine (UDP-GlcNAc). The C-terminal domain catalyzes the transfer of acetyl group from acetyl coenzyme A to glucosamine-1-phosphate (GlcN-1-P) to produce N-acetylglucosamine-1-phosphate (GlcNAc-1-P), which is converted into UDP-GlcNAc by the transfer of uridine 5-monophosphate (from uridine 5-triphosphate), a reaction catalyzed by the N-terminal domain. This is Bifunctional protein GlmU from Bacillus anthracis (strain A0248).